The following is a 257-amino-acid chain: tRNA pseudouridine synthase A (257 aa).

The active-site Nucleophile is the Asp52. Tyr111 serves as a coordination point for substrate.

It belongs to the tRNA pseudouridine synthase TruA family. In terms of assembly, homodimer.

The catalysed reaction is uridine(38/39/40) in tRNA = pseudouridine(38/39/40) in tRNA. Its function is as follows. Formation of pseudouridine at positions 38, 39 and 40 in the anticodon stem and loop of transfer RNAs. The sequence is that of tRNA pseudouridine synthase A from Cereibacter sphaeroides (strain ATCC 17025 / ATH 2.4.3) (Rhodobacter sphaeroides).